The sequence spans 840 residues: Leucine-zipper-like transcriptional regulator 1 (840 aa).

Ala-2 is subject to N-acetylalanine. Kelch repeat units lie at residues 79 to 128, 130 to 185, 187 to 238, 239 to 285, 295 to 341, and 399 to 450; these read AIYV…VYGS, MFVF…VYSD, LWIF…VCRD, KMFV…QRRY, HLYV…PERA, and AMYI…FVLG. 2 BTB domains span residues 443 to 537 and 667 to 736; these read CDVE…KYPR and CDIT…NMPP.

This sequence belongs to the LZTR1 family. As to quaternary structure, homodimer. Component of the BCR(LZTR1) E3 ubiquitin ligase complex, at least composed of CUL3, LZTR1 and RBX1. Interacts with Ras (K-Ras/KRAS, N-Ras/NRAS and H-Ras/HRAS). Interacts with RAF1. Interacts with SHOC2. Interacts with PPP1CB. Phosphorylated on tyrosine upon induction of apoptosis, leading to its degradation by the proteasome.

The protein localises to the endomembrane system. It is found in the recycling endosome. Its subcellular location is the golgi apparatus. It functions in the pathway protein modification; protein ubiquitination. Substrate-specific adapter of a BCR (BTB-CUL3-RBX1) E3 ubiquitin-protein ligase complex that mediates ubiquitination of Ras (K-Ras/KRAS, N-Ras/NRAS and H-Ras/HRAS). Is a negative regulator of RAS-MAPK signaling that acts by controlling Ras levels and decreasing Ras association with membranes. The chain is Leucine-zipper-like transcriptional regulator 1 from Homo sapiens (Human).